The primary structure comprises 395 residues: Elongation factor Tu (395 aa).

Positions 10-204 (KPHVNIGTIG…VVDEYIPTPV (195 aa)) constitute a tr-type G domain. The interval 19–26 (GHVDHGKT) is G1. 19-26 (GHVDHGKT) lines the GTP pocket. Thr-26 is a binding site for Mg(2+). Residues 60-64 (GITIN) are G2. The tract at residues 81–84 (DAPG) is G3. GTP is bound by residues 81 to 85 (DAPGH) and 136 to 139 (NKTD). The interval 136 to 139 (NKTD) is G4. The tract at residues 174-176 (SAL) is G5.

Belongs to the TRAFAC class translation factor GTPase superfamily. Classic translation factor GTPase family. EF-Tu/EF-1A subfamily. Monomer.

It is found in the cytoplasm. It catalyses the reaction GTP + H2O = GDP + phosphate + H(+). Its function is as follows. GTP hydrolase that promotes the GTP-dependent binding of aminoacyl-tRNA to the A-site of ribosomes during protein biosynthesis. This is Elongation factor Tu from Lactiplantibacillus plantarum (strain ATCC BAA-793 / NCIMB 8826 / WCFS1) (Lactobacillus plantarum).